A 225-amino-acid polypeptide reads, in one-letter code: Claudin-8 (225 aa).

The Cytoplasmic segment spans residues 1–7; the sequence is MATYALQ. The chain crosses the membrane as a helical span at residues 8 to 28; the sequence is MAALVLGGVGMVGTVAVTIMP. The Extracellular portion of the chain corresponds to 29–81; the sequence is QWRVSAFIESNIVVFENRWEGLWMNCMRHANIRMQCKVYDSLLALSPDLQASR. The chain crosses the membrane as a helical span at residues 82–102; it reads GLMCAASVLAFLAFMTAILGM. The Cytoplasmic portion of the chain corresponds to 103-117; the sequence is KCTRCTGDDENVKSR. A helical membrane pass occupies residues 118–138; the sequence is ILLTAGIIFFITGLVVLIPVS. The Extracellular segment spans residues 139 to 166; that stretch reads WVANSIIRDFYNPLVDVALKRELGEALY. The chain crosses the membrane as a helical span at residues 167 to 187; sequence IGWTTALVLIAGGALFCCVFC. The Cytoplasmic portion of the chain corresponds to 188-225; that stretch reads CTERSNSYRYSVPSHRTTQRSFHAEKRSPSIYSKSQYV. A Glycyl lysine isopeptide (Lys-Gly) (interchain with G-Cter in ubiquitin) cross-link involves residue Lys-213. The segment at 224–225 is interactions with TJP1, TJP2 and TJP3; that stretch reads YV.

It belongs to the claudin family. Can form heteropolymeric strands with other claudins. Interacts with CLDN4. Directly interacts with TJP1/ZO-1, TJP2/ZO-2 and TJP3/ZO-3. Interacts with KLHL3. Ubiquitinated by the BCR(KLHL3) E3 ubiquitin ligase complex in the kidney, leading to its degradation. As to expression, expressed primarily in lung and kidney. Present in both cortical and medullar collecting ducts (at protein level).

It is found in the cell junction. The protein resides in the tight junction. The protein localises to the cell membrane. It carries out the reaction chloride(in) = chloride(out). It catalyses the reaction bromide(in) = bromide(out). The enzyme catalyses iodide(out) = iodide(in). The catalysed reaction is fluoride(in) = fluoride(out). Can associate with other claudins to regulate tight junction structural and functional strand dynamics. May coassemble with CLDN4 into tight junction strands containing anion-selective channels that convey paracellular chloride permeability in renal collecting ducts. Cannot form tight junction strands on its own. This is Claudin-8 from Mus musculus (Mouse).